The following is a 465-amino-acid chain: Biotin biosynthesis bifunctional protein BioCD (465 aa).

Residues 1 to 254 (MTPFLPDRSI…AYGQWRKPRG (254 aa)) form a malonyl-ACP O-methyltransferase region. Residues D234 and 263 to 268 (GVGKTL) each bind ATP. The interval 255–465 (VFVTGTDTGV…DSLLSSNASR (211 aa)) is DTB synthetase. A Mg(2+)-binding site is contributed by T267. K283 is a catalytic residue. T287 is a substrate binding site. ATP-binding positions include D295, 351-354 (EGAG), and 435-437 (PQL). Mg(2+)-binding residues include D295 and E351.

The protein in the N-terminal section; belongs to the methyltransferase superfamily. This sequence in the C-terminal section; belongs to the dethiobiotin synthetase family. It depends on Mg(2+) as a cofactor.

The protein resides in the cytoplasm. The enzyme catalyses (7R,8S)-7,8-diammoniononanoate + CO2 + ATP = (4R,5S)-dethiobiotin + ADP + phosphate + 3 H(+). It carries out the reaction malonyl-[ACP] + S-adenosyl-L-methionine = malonyl-[ACP] methyl ester + S-adenosyl-L-homocysteine. Its pathway is cofactor biosynthesis; biotin biosynthesis; biotin from 7,8-diaminononanoate: step 1/2. The protein operates within cofactor biosynthesis; biotin biosynthesis. Functionally, converts the free carboxyl group of a malonyl-thioester to its methyl ester by transfer of a methyl group from S-adenosyl-L-methionine (SAM). It allows synthesis of pimeloyl-ACP via the fatty acid synthetic pathway. Its function is as follows. Catalyzes a mechanistically unusual reaction, the ATP-dependent insertion of CO2 between the N7 and N8 nitrogen atoms of 7,8-diaminopelargonic acid (DAPA, also called 7,8-diammoniononanoate) to form a ureido ring. This chain is Biotin biosynthesis bifunctional protein BioCD, found in Bordetella avium (strain 197N).